The sequence spans 284 residues: 4-diphosphocytidyl-2-C-methyl-D-erythritol kinase (284 aa).

Lys-17 is a catalytic residue. 100–110 (PMGGGLGGGSS) provides a ligand contact to ATP. The active site involves Asp-142.

This sequence belongs to the GHMP kinase family. IspE subfamily.

The enzyme catalyses 4-CDP-2-C-methyl-D-erythritol + ATP = 4-CDP-2-C-methyl-D-erythritol 2-phosphate + ADP + H(+). The protein operates within isoprenoid biosynthesis; isopentenyl diphosphate biosynthesis via DXP pathway; isopentenyl diphosphate from 1-deoxy-D-xylulose 5-phosphate: step 3/6. Its function is as follows. Catalyzes the phosphorylation of the position 2 hydroxy group of 4-diphosphocytidyl-2C-methyl-D-erythritol. This chain is 4-diphosphocytidyl-2-C-methyl-D-erythritol kinase, found in Aromatoleum aromaticum (strain DSM 19018 / LMG 30748 / EbN1) (Azoarcus sp. (strain EbN1)).